We begin with the raw amino-acid sequence, 69 residues long: MAEVKQESLSGITEGEAKEFHKIFTSSILVFFGVAAFAHLLVWIWRPWVPGPNGYSALETLTQTLTYLS.

The propeptide occupies 1 to 2; that stretch reads MA. Topologically, residues 3–22 are cytoplasmic; that stretch reads EVKQESLSGITEGEAKEFHK. 2 residues coordinate a bacteriochlorophyll: histidine 21 and histidine 39. Residues 23–45 traverse the membrane as a helical segment; sequence IFTSSILVFFGVAAFAHLLVWIW. Topologically, residues 46–56 are periplasmic; the sequence is RPWVPGPNGYS. A propeptide spanning residues 57–69 is cleaved from the precursor; the sequence is ALETLTQTLTYLS.

The protein belongs to the antenna complex beta subunit family. In terms of assembly, the core complex is formed by different alpha and beta chains, binding bacteriochlorophyll molecules, and arranged most probably in tetrameric structures disposed around the reaction center. The non-pigmented gamma chains may constitute additional components.

The protein resides in the cell inner membrane. Functionally, antenna complexes are light-harvesting systems, which transfer the excitation energy to the reaction centers. This is Light-harvesting protein B-870 beta chain from Rhodospirillum rubrum (strain ATCC 11170 / ATH 1.1.1 / DSM 467 / LMG 4362 / NCIMB 8255 / S1).